We begin with the raw amino-acid sequence, 66 residues long: Beta-mammal toxin Cv3 (66 aa).

The region spanning 1–66 is the LCN-type CS-alpha/beta domain; the sequence is KEGYIVNYYD…VWPLPNKTCN (66 aa). 4 disulfide bridges follow: cysteine 12–cysteine 65, cysteine 16–cysteine 41, cysteine 25–cysteine 46, and cysteine 29–cysteine 48.

As to expression, expressed by the venom gland.

Its subcellular location is the secreted. Functionally, beta toxins bind voltage-independently at site-4 of sodium channels (Nav) and reduces peak current and shifts the voltage of activation toward more negative potentials thereby affecting sodium channel activation and promoting spontaneous and repetitive firing. This toxin is strongly toxic to mice. This Centruroides villegasi (Scorpion) protein is Beta-mammal toxin Cv3.